Consider the following 109-residue polypeptide: DNA-binding protein MJ0691 (109 aa).

This sequence belongs to the PDCD5 family.

The polypeptide is DNA-binding protein MJ0691 (Methanocaldococcus jannaschii (strain ATCC 43067 / DSM 2661 / JAL-1 / JCM 10045 / NBRC 100440) (Methanococcus jannaschii)).